Reading from the N-terminus, the 341-residue chain is MAKVYYNGDANEQYLQGKTVAIIGYGSQGHAHAQNLRDSGVHVIIGLRKGRSWEQAEQDGFDVYSVREASKKADIVMVLLPDEKQPAVYKEEIEPELKPGNALVFAHGFNIHFSQIVPPEHVDVFLVAPKGPGHLVRRTYVEGAGVPALIAVYQDVTGHAKETALAYAKAIGAARAGVLETTFKEETETDLFGEQAVLCGGLTALIKAGFETLVEAGYQPEVAYFECLHEMKLIVDLLYEGGLSWMRYSISDTAQWGDFTSGPRVINEAVKAEMKNILHDIQTGKFAKGWILENQANRPEFNAINQRENEHLIEVVGRELRSMMPFVKAKQKEVVVPGAKN.

Positions 2–181 (AKVYYNGDAN…GAARAGVLET (180 aa)) constitute a KARI N-terminal Rossmann domain. NADP(+) contacts are provided by residues 25–28 (YGSQ), arginine 48, serine 52, and 82–85 (DEKQ). Histidine 107 is an active-site residue. Glycine 133 contributes to the NADP(+) binding site. One can recognise a KARI C-terminal knotted domain in the interval 182-327 (TFKEETETDL…RELRSMMPFV (146 aa)). The Mg(2+) site is built by aspartate 190, glutamate 194, glutamate 226, and glutamate 230. Position 251 (serine 251) interacts with substrate.

Belongs to the ketol-acid reductoisomerase family. Requires Mg(2+) as cofactor.

The catalysed reaction is (2R)-2,3-dihydroxy-3-methylbutanoate + NADP(+) = (2S)-2-acetolactate + NADPH + H(+). It carries out the reaction (2R,3R)-2,3-dihydroxy-3-methylpentanoate + NADP(+) = (S)-2-ethyl-2-hydroxy-3-oxobutanoate + NADPH + H(+). It participates in amino-acid biosynthesis; L-isoleucine biosynthesis; L-isoleucine from 2-oxobutanoate: step 2/4. It functions in the pathway amino-acid biosynthesis; L-valine biosynthesis; L-valine from pyruvate: step 2/4. Its function is as follows. Involved in the biosynthesis of branched-chain amino acids (BCAA). Catalyzes an alkyl-migration followed by a ketol-acid reduction of (S)-2-acetolactate (S2AL) to yield (R)-2,3-dihydroxy-isovalerate. In the isomerase reaction, S2AL is rearranged via a Mg-dependent methyl migration to produce 3-hydroxy-3-methyl-2-ketobutyrate (HMKB). In the reductase reaction, this 2-ketoacid undergoes a metal-dependent reduction by NADPH to yield (R)-2,3-dihydroxy-isovalerate. The sequence is that of Ketol-acid reductoisomerase (NADP(+)) from Geobacillus thermodenitrificans (strain NG80-2).